We begin with the raw amino-acid sequence, 283 residues long: Elongation factor Ts (283 aa).

The tract at residues 80 to 83 is involved in Mg(2+) ion dislocation from EF-Tu; it reads TDFV.

Belongs to the EF-Ts family.

Its subcellular location is the cytoplasm. In terms of biological role, associates with the EF-Tu.GDP complex and induces the exchange of GDP to GTP. It remains bound to the aminoacyl-tRNA.EF-Tu.GTP complex up to the GTP hydrolysis stage on the ribosome. The chain is Elongation factor Ts from Enterobacter sp. (strain 638).